The sequence spans 236 residues: Small ribosomal subunit protein uS2c (236 aa).

Belongs to the universal ribosomal protein uS2 family.

It localises to the plastid. The protein localises to the chloroplast. In Phaseolus vulgaris (Kidney bean), this protein is Small ribosomal subunit protein uS2c (rps2).